The sequence spans 538 residues: Putative cysteine ligase BshC (538 aa).

Positions 419-445 (IEAKRQIQAMEQLLAEKYSELASYLEE) form a coiled coil.

It belongs to the BshC family.

Its function is as follows. Involved in bacillithiol (BSH) biosynthesis. May catalyze the last step of the pathway, the addition of cysteine to glucosamine malate (GlcN-Mal) to generate BSH. In Lysinibacillus sphaericus (strain C3-41), this protein is Putative cysteine ligase BshC.